Consider the following 220-residue polypeptide: Vesicle-associated membrane protein 7 (220 aa).

Alanine 2 is subject to N-acetylalanine. Over 2-188 (AILFAVVARG…ARAMCVKNVK (187 aa)) the chain is Cytoplasmic. One can recognise a Longin domain in the interval 7–110 (VVARGTTILA…AMNSEFSSVL (104 aa)). The v-SNARE coiled-coil homology domain occupies 125–185 (RVTETQAQVD…RNLARAMCVK (61 aa)). Serine 167 and serine 168 each carry phosphoserine. Residues 189–209 (LTAIIVVVSIVFIYIIVSPLC) traverse the membrane as a helical; Anchor for type IV membrane protein segment. The Vesicular segment spans residues 210–220 (GGFTWPSCVKK).

Belongs to the synaptobrevin family. In terms of assembly, may interact with STX17. Component of the SNARE complex composed of STX4, SNAP23 and VAMP7 that binds SYT7 during lysosomal exocytosis. Component of the SNARE complex composed of STX7, STX8, VAMP7 and VTI1B that is required for heterotypic fusion of late endosomes with lysosomes. Interacts with PICALM. Interacts with RAB21. As to expression, expressed in brain, kidney, liver, lung, spleen and thymus. Not expressed in heart and skeletal muscle.

Its subcellular location is the cytoplasmic vesicle. It is found in the secretory vesicle membrane. The protein resides in the golgi apparatus. It localises to the trans-Golgi network membrane. The protein localises to the late endosome membrane. Its subcellular location is the lysosome membrane. It is found in the endoplasmic reticulum membrane. The protein resides in the phagosome membrane. It localises to the synapse. The protein localises to the synaptosome. Its function is as follows. Involved in the targeting and/or fusion of transport vesicles to their target membrane during transport of proteins from the early endosome to the lysosome. Required for heterotypic fusion of late endosomes with lysosomes and homotypic lysosomal fusion. Required for calcium regulated lysosomal exocytosis. Involved in the export of chylomicrons from the endoplasmic reticulum to the cis Golgi. Required for exocytosis of mediators during eosinophil and neutrophil degranulation, and target cell killing by natural killer cells. Required for focal exocytosis of late endocytic vesicles during phagosome formation. The polypeptide is Vesicle-associated membrane protein 7 (Vamp7) (Rattus norvegicus (Rat)).